The primary structure comprises 352 residues: MHFLDQAKIYLKSGAGGPGAVSFRREKYIEYGGPDGGNGGKGGDIVFEAVQGLNTLIDFRYAQHFKAKRGAHGQGKDRTGAGAPDLVIKVPVGTQVLSEDKEEVLADFTEVGQRVTFLAGGMGGRGNASYKSSTNRAPRQHQPGQAGEEMWVWLRLKLLADVGLLGLPNAGKSTFINAVSNAKAKVGHYAFTTLVPKLGVVNHKGREFVLADIPGLIEGAAEGAGIGDRFLGHIERCRVLIHLVDISGEDPAEAFQTVNAELEAYGEGLEDKPQLVALNKLDLADEELVAGFAEELLEAGADEVFAVSGATGAGIEPLLDAVLGYLPDSTSTETKGSEVEEVDEEGGEWSPI.

Residues 1–159 (MHFLDQAKIY…MWVWLRLKLL (159 aa)) form the Obg domain. The region spanning 160–327 (ADVGLLGLPN…LLDAVLGYLP (168 aa)) is the OBG-type G domain. GTP-binding positions include 166–173 (GLPNAGKS), 191–195 (FTTLV), 212–215 (DIPG), 279–282 (NKLD), and 308–310 (SGA). Residues Ser-173 and Thr-193 each contribute to the Mg(2+) site. A disordered region spans residues 329 to 352 (STSTETKGSEVEEVDEEGGEWSPI). Residues 339 to 352 (VEEVDEEGGEWSPI) show a composition bias toward acidic residues.

The protein belongs to the TRAFAC class OBG-HflX-like GTPase superfamily. OBG GTPase family. As to quaternary structure, monomer. Mg(2+) serves as cofactor.

It is found in the cytoplasm. In terms of biological role, an essential GTPase which binds GTP, GDP and possibly (p)ppGpp with moderate affinity, with high nucleotide exchange rates and a fairly low GTP hydrolysis rate. Plays a role in control of the cell cycle, stress response, ribosome biogenesis and in those bacteria that undergo differentiation, in morphogenesis control. The protein is GTPase Obg of Erythrobacter litoralis (strain HTCC2594).